The following is a 414-amino-acid chain: NADH-ubiquinone oxidoreductase chain 4 (414 aa).

The next 10 membrane-spanning stretches (helical) occupy residues 18-38 (LVQL…MIGV), 47-67 (IAAF…LMSI), 96-116 (IIFI…PLHL), 126-146 (PTAG…YGYI), 160-180 (YFPI…IATL), 188-208 (IVAY…FSGV), 216-236 (IILM…IGVI), 254-274 (MMPI…AFPI), 293-313 (IIIA…SFWL), and 375-395 (VNIF…IVGM).

It belongs to the complex I subunit 4 family.

Its subcellular location is the mitochondrion membrane. The enzyme catalyses a ubiquinone + NADH + 5 H(+)(in) = a ubiquinol + NAD(+) + 4 H(+)(out). Its function is as follows. Core subunit of the mitochondrial membrane respiratory chain NADH dehydrogenase (Complex I) that is believed to belong to the minimal assembly required for catalysis. Complex I functions in the transfer of electrons from NADH to the respiratory chain. The immediate electron acceptor for the enzyme is believed to be ubiquinone. The polypeptide is NADH-ubiquinone oxidoreductase chain 4 (nad4) (Dictyostelium citrinum (Slime mold)).